A 563-amino-acid polypeptide reads, in one-letter code: Group II intron-interrupted relaxase LtrB (563 aa).

Tyr44 is an active-site residue. Residues His159 and His161 each coordinate Mg(2+).

This sequence belongs to the mobilization (MOB) protein type 1 family. Mg(2+) serves as cofactor. Mn(2+) is required as a cofactor.

Its function is as follows. Mediates initiation of conjugal transfer possibly by introducing a single-stranded nick at the potential origin of transfer. The polypeptide is Group II intron-interrupted relaxase LtrB (ltrBE1) (Lactococcus lactis subsp. cremoris (strain MG1363)).